Consider the following 93-residue polypeptide: Phosphocarrier protein HPr (93 aa).

The 88-residue stretch at 2 to 89 (AERRVNVGWA…KLVAEGLEEL (88 aa)) folds into the HPr domain. His15 serves as the catalytic Pros-phosphohistidine intermediate.

The protein belongs to the HPr family.

The protein resides in the cytoplasm. In terms of biological role, general (non sugar-specific) component of the phosphoenolpyruvate-dependent sugar phosphotransferase system (sugar PTS). This major carbohydrate active-transport system catalyzes the phosphorylation of incoming sugar substrates concomitantly with their translocation across the cell membrane. The phosphoryl group from phosphoenolpyruvate (PEP) is transferred to the phosphoryl carrier protein HPr by enzyme I. Phospho-HPr then transfers it to the PTS EIIA domain. This chain is Phosphocarrier protein HPr (ptsH), found in Streptomyces coelicolor (strain ATCC BAA-471 / A3(2) / M145).